We begin with the raw amino-acid sequence, 505 residues long: One cut domain family member 2 (505 aa).

Disordered stretches follow at residues 29–94, 165–190, and 275–333; these read LGTL…GTAA, KFHH…RLSG, and EQHL…QLEE. Over residues 35-56 the composition is skewed to gly residues; the sequence is PVGGGSGGGGGGGGGGGGGGPG. Basic residues predominate over residues 167 to 187; the sequence is HHPHPHHHPHHHHHHHHHHQR. The CUT DNA-binding region spans 325–411; sequence VATSGQLEEI…QRMSALRLAA (87 aa). The segment at residues 427–486 is a DNA-binding region (homeobox); that stretch reads QKKSRLVFTDLQRRTLFAIFKENKRPSKEMQITISQQLGLELTTVSNFFMNARRRSLEKW.

It belongs to the CUT homeobox family.

The protein localises to the nucleus. Transcriptional activator. Activates the transcription of a number of liver genes such as HNF3B. The sequence is that of One cut domain family member 2 (Onecut2) from Mus musculus (Mouse).